The chain runs to 164 residues: Osteocalcin 2b (164 aa).

Positions 1 to 18 are cleaved as a signal peptide; that stretch reads MKSLTLLTICAVLSVSLS. Residues 19–115 constitute a propeptide that is removed on maturation; sequence MNDLALDVVL…LASVLLRRKR (97 aa). Residues 30–95 are compositionally biased toward low complexity; sequence PDPAAEPAPA…EAMAEDPAAA (66 aa). Residues 30 to 99 form a disordered region; that stretch reads PDPAAEPAPA…EDPAAATEPE (70 aa). Positions 128–160 constitute a Gla domain; sequence QVESLSEVCELNLACEHMAETAGIVAAYTAYYG. Residues Glu130, Glu134, and Glu137 each coordinate Ca(2+). 3 positions are modified to 4-carboxyglutamate: Glu130, Glu134, and Glu137. Cys136 and Cys142 are oxidised to a cystine.

It belongs to the osteocalcin/matrix Gla protein family. Post-translationally, gamma-carboxyglutamate residues are formed by vitamin K dependent carboxylation. These residues are essential for the binding of calcium.

The protein localises to the secreted. In terms of biological role, binds strongly to apatite and calcium. This is Osteocalcin 2b from Oncorhynchus mykiss (Rainbow trout).